The following is a 107-amino-acid chain: Large ribosomal subunit protein uL24 (107 aa).

It belongs to the universal ribosomal protein uL24 family. As to quaternary structure, part of the 50S ribosomal subunit.

Its function is as follows. One of two assembly initiator proteins, it binds directly to the 5'-end of the 23S rRNA, where it nucleates assembly of the 50S subunit. In terms of biological role, one of the proteins that surrounds the polypeptide exit tunnel on the outside of the subunit. The chain is Large ribosomal subunit protein uL24 from Thiobacillus denitrificans (strain ATCC 25259 / T1).